The following is a 486-amino-acid chain: MTTFYTVISWLSVFGYWLLIAGVTLRILMKRRAVPSAMAWLLIIYILPLVGIIAYLSFGELHLGKRRAERAKAMWPSTARWLSELKECQHIFANSNSEVASPLFQLCERRQGINGVKGNQLQLLTTTDDTLKALVRDIELARHNIEMVFYIWQPGGLVDQVAESLMAAARRGVHCRLLLDSAGSKQFFRSPYPAMMRNAGIEVVEALKVNVFRMFLRRMDLRQHRKIVLIDNYVAYTGSMNMVDPRFFKQDAGVGQWIDMMARMEGPVATTLGIVYACDWEIETGKRILPPPPDANIMPFEEETGHTIQVIASGPGFPEEMIHQALLTAVYAAREQLIMTTPYFVPSDDLLHAICTAAQRGVDVSIIVPRENDSMMVRWASRAFFTELLNAGVKIYQFEGGLLHSKSVLVDGQLSLVGTVNLDMRSLWLNFEITLVIDDDGFGADLAQVQDDYIARSALLDGERWNKRPLWHRVTERLFYFFSPLL.

Transmembrane regions (helical) follow at residues 3–23 (TFYTVISWLSVFGYWLLIAGV) and 38–58 (MAWLLIIYILPLVGIIAYLSF). 2 consecutive PLD phosphodiesterase domains span residues 219 to 246 (MDLRQHRKIVLIDNYVAYTGSMNMVDPR) and 399 to 426 (EGGLLHSKSVLVDGQLSLVGTVNLDMRS). Residues histidine 224, lysine 226, aspartate 231, histidine 404, lysine 406, and aspartate 411 contribute to the active site.

The protein belongs to the phospholipase D family. Cardiolipin synthase subfamily. ClsA sub-subfamily.

The protein resides in the cell inner membrane. It carries out the reaction 2 a 1,2-diacyl-sn-glycero-3-phospho-(1'-sn-glycerol) = a cardiolipin + glycerol. Functionally, catalyzes the reversible phosphatidyl group transfer from one phosphatidylglycerol molecule to another to form cardiolipin (CL) (diphosphatidylglycerol) and glycerol. The polypeptide is Cardiolipin synthase A (Yersinia pseudotuberculosis serotype O:1b (strain IP 31758)).